The primary structure comprises 63 residues: Race-specific elicitor A9 (63 aa).

Residues 1 to 23 form the signal peptide; the sequence is MKLSLLSVELALLIATTLPLCWA. A propeptide spanning residues 24-35 is cleaved from the precursor; sequence AALPVGLGVGLD. 3 cysteine pairs are disulfide-bonded: cysteine 37–cysteine 51, cysteine 41–cysteine 54, and cysteine 47–cysteine 61.

In terms of biological role, this necrosis-inducing peptide induces a hypersensitive response on Cf-9 tomato genotypes. Race-specific elicitors are compounds which only induce defense responses in genotypes of host plants which are resistant to the pathogenic race that produces the elicitor, but not in susceptible genotypes. This Passalora fulva (Tomato leaf mold) protein is Race-specific elicitor A9 (AVR9).